A 197-amino-acid chain; its full sequence is Phospholipid hydroperoxide glutathione peroxidase (197 aa).

Residue Ser40 is modified to Phosphoserine. The active site involves Sec73. Residue Sec73 is a non-standard amino acid, selenocysteine.

The protein belongs to the glutathione peroxidase family. As to quaternary structure, monomer. Has a tendency to form higher mass oligomers. Interacts with FUNDC1; this interaction promotes GPX4 recruitment into mitochondria through TOM/TIM complex where it is degraded by mitophagy. In terms of tissue distribution, expressed in testis. Also expressed in liver, lung, kidney and spinal cord.

It is found in the mitochondrion. The protein localises to the cytoplasm. It catalyses the reaction a hydroperoxy polyunsaturated fatty acid + 2 glutathione = a hydroxy polyunsaturated fatty acid + glutathione disulfide + H2O. The enzyme catalyses 2 glutathione + H2O2 = glutathione disulfide + 2 H2O. It carries out the reaction tert-butyl hydroperoxide + 2 glutathione = tert-butanol + glutathione disulfide + H2O. The catalysed reaction is cumene hydroperoxide + 2 glutathione = 2-phenylpropan-2-ol + glutathione disulfide + H2O. It catalyses the reaction (9S)-hydroperoxy-(10E,12Z)-octadecadienoate + 2 glutathione = (9S)-hydroxy-(10E,12Z)-octadecadienoate + glutathione disulfide + H2O. The enzyme catalyses (13S)-hydroperoxy-(9Z,11E)-octadecadienoate + 2 glutathione = (13S)-hydroxy-(9Z,11E)-octadecadienoate + glutathione disulfide + H2O. It carries out the reaction (5S)-hydroperoxy-(6E,8Z,11Z,14Z)-eicosatetraenoate + 2 glutathione = (5S)-hydroxy-(6E,8Z,11Z,14Z)-eicosatetraenoate + glutathione disulfide + H2O. The catalysed reaction is (12R)-hydroperoxy-(5Z,8Z,10E,14Z)-eicosatetraenoate + 2 glutathione = (12R)-hydroxy-(5Z,8Z,10E,14Z)-eicosatetraenoate + glutathione disulfide + H2O. It catalyses the reaction (12S)-hydroperoxy-(5Z,8Z,10E,14Z)-eicosatetraenoate + 2 glutathione = (12S)-hydroxy-(5Z,8Z,10E,14Z)-eicosatetraenoate + glutathione disulfide + H2O. The enzyme catalyses (15S)-hydroperoxy-(5Z,8Z,11Z,13E)-eicosatetraenoate + 2 glutathione = (15S)-hydroxy-(5Z,8Z,11Z,13E)-eicosatetraenoate + glutathione disulfide + H2O. It carries out the reaction (5S)-hydroperoxy-(6E,8Z,11Z,14Z,17Z)-eicosapentaenoate + 2 glutathione = (5S)-hydroxy-(6E,8Z,11Z,14Z,17Z)-eicosapentaenoate + glutathione disulfide + H2O. The catalysed reaction is (12S)-hydroperoxy-(5Z,8Z,10E,14Z,17Z)-eicosapentaenoate + 2 glutathione = (12S)-hydroxy-(5Z,8Z,10E,14Z,17Z)-eicosapentaenoate + glutathione disulfide + H2O. It catalyses the reaction (15S)-hydroperoxy-(5Z,8Z,11Z,13E,17Z)-eicosapentaenoate + 2 glutathione = (15S)-hydroxy-(5Z,8Z,11Z,13E,17Z)-eicosapentaenoate + glutathione disulfide + H2O. The enzyme catalyses (15S)-hydroperoxy-(11Z,13E)-eicosadienoate + 2 glutathione = (15S)-hydroxy-(11Z,13E)-eicosadienoate + glutathione disulfide + H2O. It carries out the reaction (17S)-hydroperoxy-(4Z,7Z,10Z,13Z,15E,19Z)-docosahexaenoate + 2 glutathione = (17S)-hydroxy-(4Z,7Z,10Z,13Z,15E,19Z)-docosahexaenoate + glutathione disulfide + H2O. The catalysed reaction is a hydroperoxy-1,2-diacyl-glycero-3-phosphocholine + 2 glutathione = a hydroxy-1,2-diacyl-glycero-3-phosphocholine + glutathione disulfide + H2O. Its function is as follows. Essential antioxidant peroxidase that directly reduces phospholipid hydroperoxide even if they are incorporated in membranes and lipoproteins. Can also reduce fatty acid hydroperoxide, cholesterol hydroperoxide and thymine hydroperoxide. Plays a key role in protecting cells from oxidative damage by preventing membrane lipid peroxidation. Required to prevent cells from ferroptosis, a non-apoptotic cell death resulting from an iron-dependent accumulation of lipid reactive oxygen species. The presence of selenocysteine (Sec) versus Cys at the active site is essential for life: it provides resistance to overoxidation and prevents cells against ferroptosis. The presence of Sec at the active site is also essential for the survival of a specific type of parvalbumin-positive interneurons, thereby preventing against fatal epileptic seizures. May be required to protect cells from the toxicity of ingested lipid hydroperoxides. Required for normal sperm development and male fertility. Essential for maturation and survival of photoreceptor cells. Plays a role in a primary T-cell response to viral and parasitic infection by protecting T-cells from ferroptosis and by supporting T-cell expansion. Plays a role of glutathione peroxidase in platelets in the arachidonic acid metabolism. Reduces hydroperoxy ester lipids formed by a 15-lipoxygenase that may play a role as down-regulator of the cellular 15-lipoxygenase pathway. Can also reduce small soluble hydroperoxides such as H2O2, cumene hydroperoxide and tert-butyl hydroperoxide. The protein is Phospholipid hydroperoxide glutathione peroxidase of Callithrix jacchus (White-tufted-ear marmoset).